The sequence spans 291 residues: Light-independent protochlorophyllide reductase iron-sulfur ATP-binding protein (291 aa).

Residues 10–15 (GIGKST) and Lys39 contribute to the ATP site. Position 14 (Ser14) interacts with Mg(2+). Residues Cys95 and Cys129 each contribute to the [4Fe-4S] cluster site. 180–181 (NR) lines the ATP pocket.

Belongs to the NifH/BchL/ChlL family. In terms of assembly, homodimer. Protochlorophyllide reductase is composed of three subunits; ChlL, ChlN and ChlB. The cofactor is [4Fe-4S] cluster.

The protein localises to the plastid. Its subcellular location is the chloroplast. It carries out the reaction chlorophyllide a + oxidized 2[4Fe-4S]-[ferredoxin] + 2 ADP + 2 phosphate = protochlorophyllide a + reduced 2[4Fe-4S]-[ferredoxin] + 2 ATP + 2 H2O. It participates in porphyrin-containing compound metabolism; chlorophyll biosynthesis (light-independent). Component of the dark-operative protochlorophyllide reductase (DPOR) that uses Mg-ATP and reduced ferredoxin to reduce ring D of protochlorophyllide (Pchlide) to form chlorophyllide a (Chlide). This reaction is light-independent. The L component serves as a unique electron donor to the NB-component of the complex, and binds Mg-ATP. This chain is Light-independent protochlorophyllide reductase iron-sulfur ATP-binding protein, found in Pinus koraiensis (Korean pine).